Consider the following 338-residue polypeptide: Short-chain dehydrogenase/reductase phmF (338 aa).

NADP(+)-binding residues include leucine 46, arginine 71, aspartate 96, and asparagine 123. The Proton donor role is filled by serine 177. NADP(+) contacts are provided by tyrosine 211 and lysine 215. The active-site Proton acceptor is tyrosine 211. Catalysis depends on lysine 215, which acts as the Lowers pKa of active site Tyr.

Belongs to the short-chain dehydrogenases/reductases (SDR) family.

The protein operates within mycotoxin biosynthesis. Its function is as follows. Short-chain dehydrogenase/reductase; part of the gene cluster that mediates the biosynthesis of the mycotoxins phomacins, leucine-derived cytochalasans with potent actin polymerization-inhibitory activities and monocot-specific antigerminative activities. The first step in the pathway is catalyzed by the hybrid PKS-NRPS phmA, assisted by the enoyl reductase phmE, that are responsible for fusion of the leucine precursor and the polyketide backbone to produce a 2-pyrrolidone intermediate. The polyketide synthase module (PKS) of phmA is responsible for the synthesis of the polyketide backbone and the downstream nonribosomal peptide synthetase (NRPS) amidates the carboxyl end of the polyketide with the leucine precursor. Because phmA lacks a designated enoylreductase (ER) domain, the required activity is provided the enoyl reductase phmE. Reduction by the hydrolyase phmG, followed by dehydration and intra-molecular Diels-Alder cyclization by the Diels-Alderase phmD then yield the required isoindolone-fused macrocycle. A number of oxidative steps catalyzed by the tailoring cytochrome P450 monooxygenase phmB, the FAD-linked oxidoreductase phmC and the short-chain dehydrogenase/reductase phmF, are further required to afford the final products, phomacin D and phomacin E. This chain is Short-chain dehydrogenase/reductase phmF, found in Phaeosphaeria nodorum (strain SN15 / ATCC MYA-4574 / FGSC 10173) (Glume blotch fungus).